Reading from the N-terminus, the 584-residue chain is Extracellular serine/threonine protein kinase FAM20C (584 aa).

At 1 to 10 the chain is on the cytoplasmic side; that stretch reads MKMMLVRRFR. The propeptide occupies 1–92; sequence MKMMLVRRFR…PNKHTLRILQ (92 aa). A helical; Signal-anchor for type II membrane protein membrane pass occupies residues 11–31; sequence VLILMVFLVACALHIALDLLP. At 32 to 584 the chain is on the lumenal side; the sequence is RLERRGARPS…DTEHRAASAR (553 aa). Disordered regions lie at residues 62–81 and 94–159; these read QVRG…GDAG and FSSD…GDAS. Composition is skewed to low complexity over residues 71 to 81 and 95 to 112; these read PAASSAAGDAG and SSDP…KLPP. Asn-101 is a glycosylation site (N-linked (GlcNAc...) asparagine). Ser-106 bears the Phosphoserine mark. Residues 116-149 are compositionally biased toward basic and acidic residues; sequence PAERALRGRDPGALRPHDPAHRPLLRDPGPRRSE. Positions 269, 285, and 306 each coordinate ATP. Residue Glu-306 participates in Mn(2+) binding. The N-linked (GlcNAc...) asparagine glycan is linked to Asn-335. The interval 354–565 is kinase domain; sequence FISPANNICF…AVRDCVERNG (212 aa). Cystine bridges form between Cys-362-Cys-378 and Cys-367-Cys-371. Residue 389-392 coordinates ATP; the sequence is AAFL. 2 cysteine pairs are disulfide-bonded: Cys-426-Cys-500 and Cys-501-Cys-560. The active site involves Asp-458. ATP is bound at residue Glu-463. Asn-470 carries N-linked (GlcNAc...) asparagine glycosylation. ATP is bound at residue Asp-478. Asp-478 contributes to the Mn(2+) binding site.

Belongs to the FAM20 family. In terms of assembly, homodimer; disulfide-linked. Interacts with FAM20A; probably forming a heterotetramer of 2 subunits of FAM20A and 2 subunits of FAM20C. Interacts with protease MBTPS1/S1P; the interaction results in FAM20C cleavage and secretion. Interacts with COPII components SEC23A and SEC24A; transport of FAM20C from the endoplasmic reticulum to the Golgi is likely to be mediated by COPII vesicles. The cofactor is Mn(2+). N-glycosylation is required for folding. In terms of processing, autophosphorylated. Post-translationally, propeptide cleavage by MBTPS1/S1P promotes FAM20C secretion and maximal kinase activity which is essential for efficient osteoblast differentiation and biomineralization. In terms of tissue distribution, widely expressed.

The protein resides in the golgi apparatus membrane. It is found in the secreted. The protein localises to the endoplasmic reticulum. It catalyses the reaction L-seryl-[protein] + ATP = O-phospho-L-seryl-[protein] + ADP + H(+). It carries out the reaction L-threonyl-[protein] + ATP = O-phospho-L-threonyl-[protein] + ADP + H(+). With respect to regulation, serine/threonine protein kinase activity is increased upon interaction with FAM20A. Its function is as follows. Golgi serine/threonine protein kinase that phosphorylates secretory pathway proteins within Ser-x-Glu/pSer motifs and plays a key role in biomineralization of bones and teeth. Constitutes the main protein kinase for extracellular proteins, generating the majority of the extracellular phosphoproteome. Mainly phosphorylates proteins within the Ser-x-Glu/pSer motif, but also displays a broader substrate specificity. Phosphorylates ERO1A, enhancing its activity which is required to maintain endoplasmic reticulum redox homeostasis and for oxidative protein folding. During endoplasmic reticulum stress, phosphorylates P4HB/PDIA1 which induces a functional switch, causing P4HB to change from an oxidoreductase to a molecular chaperone. This is critical to maintain ER proteostasis and reduce cell death under ER stress. Phosphorylation of P4HB also promotes its interaction with ERN1, leading to reduced activity of ERN1, a key sensor for the endoplasmic reticulum unfolded protein response. Required for osteoblast differentiation and mineralization. Phosphorylates casein as well as a number of proteins involved in biomineralization such as AMELX, AMTN, ENAM and SPP1/OPN. In addition to its role in biomineralization, also plays a role in lipid homeostasis, wound healing and cell migration and adhesion. The sequence is that of Extracellular serine/threonine protein kinase FAM20C from Homo sapiens (Human).